Here is a 459-residue protein sequence, read N- to C-terminus: MKEFDTIAAISTAIGNSGISIIRVSGKEALSIVDKVFKGKSKKGIIEMNTYTMRYGNIVELSNGDIIDEVIVSFMKGPKSFTGENVVEVNCHGGMYPTKRVLEEIIRAGARLAEPGEFTKRAFLNGRLDLSQAEAVMDIINSKTELSMKSAVAQSEGVISREINKLRQRILEIIAHIEATVDYPEDDLEEVTAENVSKDLNDILKEIDELILSADEGKILREGLNTVIIGKPNVGKSSLLNLLLDEKRAIVTDIPGTTRDVIEEYINISGIPIKIVDTAGIRETEDVIEKMGVERSKEKMENADLIIFMIDSSKKIDAEDLEIIDYIKDKKYIVLLNKVDLKNREDKSKLDLLNKDNIIEFSVKEKVGLEKLKDTIENMFATGNLQHSNTMITNTRHKEALLRAREHCTTSLKALQDTLAIDLASIDIRNAWTALGEITGETLQEDLIDKIFKDFCLGK.

(6S)-5-formyl-5,6,7,8-tetrahydrofolate-binding residues include Arg23, Glu88, and Arg127. Residues 223-381 (GLNTVIIGKP…LKDTIENMFA (159 aa)) enclose the TrmE-type G domain. Position 233 (Asn233) interacts with K(+). GTP contacts are provided by residues 233-238 (NVGKSS), 252-258 (TDIPGTT), and 277-280 (DTAG). Ser237 lines the Mg(2+) pocket. Positions 252, 254, and 257 each coordinate K(+). Thr258 serves as a coordination point for Mg(2+). Residue Lys459 coordinates (6S)-5-formyl-5,6,7,8-tetrahydrofolate.

Belongs to the TRAFAC class TrmE-Era-EngA-EngB-Septin-like GTPase superfamily. TrmE GTPase family. As to quaternary structure, homodimer. Heterotetramer of two MnmE and two MnmG subunits. Requires K(+) as cofactor.

It localises to the cytoplasm. Its function is as follows. Exhibits a very high intrinsic GTPase hydrolysis rate. Involved in the addition of a carboxymethylaminomethyl (cmnm) group at the wobble position (U34) of certain tRNAs, forming tRNA-cmnm(5)s(2)U34. This is tRNA modification GTPase MnmE from Clostridium acetobutylicum (strain ATCC 824 / DSM 792 / JCM 1419 / IAM 19013 / LMG 5710 / NBRC 13948 / NRRL B-527 / VKM B-1787 / 2291 / W).